A 374-amino-acid polypeptide reads, in one-letter code: tRNA-specific 2-thiouridylase MnmA (374 aa).

Residues 16–23 (GMSGGVDS) and M42 contribute to the ATP site. The interval 102-104 (NPD) is interaction with target base in tRNA. Catalysis depends on C107, which acts as the Nucleophile. An intrachain disulfide couples C107 to C203. G131 is a binding site for ATP. Residues 153–155 (KDQ) form an interaction with tRNA region. C203 acts as the Cysteine persulfide intermediate in catalysis. The tract at residues 311 to 312 (RY) is interaction with tRNA.

Belongs to the MnmA/TRMU family.

The protein resides in the cytoplasm. The enzyme catalyses S-sulfanyl-L-cysteinyl-[protein] + uridine(34) in tRNA + AH2 + ATP = 2-thiouridine(34) in tRNA + L-cysteinyl-[protein] + A + AMP + diphosphate + H(+). Functionally, catalyzes the 2-thiolation of uridine at the wobble position (U34) of tRNA, leading to the formation of s(2)U34. In Exiguobacterium sibiricum (strain DSM 17290 / CCUG 55495 / CIP 109462 / JCM 13490 / 255-15), this protein is tRNA-specific 2-thiouridylase MnmA.